Reading from the N-terminus, the 186-residue chain is MGTPNDQAVLQAIFNPDTPFGDVVGLDLEEAEEGDEDGVFPQAQLEHSKALELQGVRAAEAGDLHTALEKFGQAISLLPDRASAYNNRAQARRLQGDVAGALEDLERAVTLSGGRGRAARQSFVQSGLLARFQGRDDDARRDFEKAARLGSPFARRQLVLLNPYAALCNRMLADMMGQLRAPSNGR.

TPR repeat units lie at residues 48 to 81 (SKAL…LPDR), 83 to 115 (SAYN…SGGR), and 120 to 153 (RQSF…GSPF).

The protein belongs to the TTC36 family.

In Mus musculus (Mouse), this protein is Tetratricopeptide repeat protein 36 (Ttc36).